Reading from the N-terminus, the 253-residue chain is 5'/3'-nucleotidase SurE (253 aa).

Residues D8, D9, S39, and N92 each coordinate a divalent metal cation.

It belongs to the SurE nucleotidase family. It depends on a divalent metal cation as a cofactor.

The protein resides in the cytoplasm. It carries out the reaction a ribonucleoside 5'-phosphate + H2O = a ribonucleoside + phosphate. It catalyses the reaction a ribonucleoside 3'-phosphate + H2O = a ribonucleoside + phosphate. The enzyme catalyses [phosphate](n) + H2O = [phosphate](n-1) + phosphate + H(+). Its function is as follows. Nucleotidase with a broad substrate specificity as it can dephosphorylate various ribo- and deoxyribonucleoside 5'-monophosphates and ribonucleoside 3'-monophosphates with highest affinity to 3'-AMP. Also hydrolyzes polyphosphate (exopolyphosphatase activity) with the preference for short-chain-length substrates (P20-25). Might be involved in the regulation of dNTP and NTP pools, and in the turnover of 3'-mononucleotides produced by numerous intracellular RNases (T1, T2, and F) during the degradation of various RNAs. The polypeptide is 5'/3'-nucleotidase SurE (Salmonella arizonae (strain ATCC BAA-731 / CDC346-86 / RSK2980)).